Here is a 548-residue protein sequence, read N- to C-terminus: Solute carrier family 22 member 7 (548 aa).

A helical membrane pass occupies residues 21-41 (VALLALPRVLLPLHFLLPIFL). A glycan (N-linked (GlcNAc...) asparagine) is linked at Asn-91. A run of 11 helical transmembrane segments spans residues 146–166 (AAST…GYLS), 180–200 (VSTL…MFAI), 204–224 (LTGS…LEWL), 234–254 (VLSS…GYLI), 259–279 (WLLL…WWVP), 346–366 (ISLC…GLSL), 376–397 (YQTQ…YLSV), 404–423 (LTQA…RLLV), 432–452 (TVLA…AYLF), 466–486 (MGLT…AALL), and 493–513 (LPKL…LLLP). Catalysis depends on Phe-441, which acts as the Important for glutamate counteranion efflux. The interval 522-548 (ETIQDVERKSAPTSLQEEEMPMKQVQN) is disordered.

Belongs to the major facilitator (TC 2.A.1) superfamily. Organic cation transporter (TC 2.A.1.19) family. In terms of tissue distribution, mainly expressed in liver and kidney. In kidney, expressed in proximal tubular cells. Also expressed in pancreas, small intestine, spinal cord, lung, brain and heart. Expressed in fetal liver.

The protein resides in the basolateral cell membrane. It localises to the apical cell membrane. Its subcellular location is the cell membrane. The protein localises to the cytoplasm. It is found in the cytosol. The catalysed reaction is orotate(out) + L-glutamate(in) = orotate(in) + L-glutamate(out). The enzyme catalyses 3',5'-cyclic GMP(in) = 3',5'-cyclic GMP(out). It catalyses the reaction GMP(in) = GMP(out). It carries out the reaction 2'-deoxyguanosine(in) = 2'-deoxyguanosine(out). The catalysed reaction is GDP(in) = GDP(out). The enzyme catalyses guanosine(in) = guanosine(out). It catalyses the reaction GTP(in) = GTP(out). It carries out the reaction 3',5'-cyclic AMP(in) = 3',5'-cyclic AMP(out). The catalysed reaction is creatinine(in) = creatinine(out). The enzyme catalyses prostaglandin E2(out) = prostaglandin E2(in). It catalyses the reaction 2-oxoglutarate(in) = 2-oxoglutarate(out). It carries out the reaction glutarate(in) = glutarate(out). The catalysed reaction is urate(out) = urate(in). The enzyme catalyses estrone 3-sulfate(out) = estrone 3-sulfate(in). It catalyses the reaction prostaglandin F2alpha(out) = prostaglandin F2alpha(in). Functions as a Na(+)-independent bidirectional multispecific transporter. Contributes to the renal and hepatic elimination of endogenous organic compounds from the systemic circulation into the urine and bile, respectively. Capable of transporting a wide range of purine and pyrimidine nucleobases, nucleosides and nucleotides, with cGMP, 2'deoxyguanosine and GMP being the preferred substrates. Functions as a pH- and chloride-independent cGMP bidirectional facilitative transporter that can regulate both intracellular and extracellular levels of cGMP and may be involved in cGMP signaling pathways. Mediates orotate/glutamate bidirectional exchange and most likely display a physiological role in hepatic release of glutamate into the blood. Involved in renal secretion and possible reabsorption of creatinine. Able to uptake prostaglandin E2 (PGE2) and may contribute to PGE2 renal excretion. Also transports alpha-ketoglutarate and urate. Apart from the orotate/glutamate exchange, the counterions for the uptake of other SLC22A7/OAT2 substrates remain to be identified. Its function is as follows. Non functional transporter. Functionally, involved in the uptake of prostaglandin F2-alpha (PGF2-alpha). This is Solute carrier family 22 member 7 from Homo sapiens (Human).